A 923-amino-acid polypeptide reads, in one-letter code: DNA mismatch repair protein PMS1 (923 aa).

Composition is skewed to basic and acidic residues over residues 543 to 553, 565 to 581, and 591 to 601; these read DMTPSERDSEL, NVERHEREHEKPIRFEE, and GDVERVSEDNP. The interval 543–603 is disordered; that stretch reads DMTPSERDSE…ERVSEDNPRC (61 aa).

This sequence belongs to the DNA mismatch repair MutL/HexB family. Heterodimer of MLH1 and PMS1, called MutLalpha, which is the major MMR MutL activity correcting base-base mismatches as well as IDLs. The heterodimer binds double strand DNA independently of a mismatch with positive cooperativity and has more than one DNA binding site. Forms a ternary complex with either the MSH2-MSH6 (MutSalpha) or the MSH2-MSH3 heterodimer (MutSbeta), which recognize and bind to mismatch DNA. Ternary complex formation is promoted by ATP binding. As to expression, expressed at very low levels in mature leaves. Detected in rapidly dividing tissues.

It localises to the nucleus. Required for DNA mismatch repair (MMR), correcting base-base mismatches and insertion-deletion loops (IDLs) resulting from DNA replication, DNA damage or from recombination events between non-identical sequences during meiosis. Component of the MutLalpha heterodimer that forms a ternary complex with the MutS heterodimers, which initially recognize the DNA mismatches. This complex is thought to be responsible for directing the downstream MMR events, including strand discrimination, excision, and resynthesis. Plays a major role in maintaining the genetic stability of simple sequence repeats and in the repair of heteroduplex sites present in meiotic recombination intermediates. Does not seem to be required for homologous somatic recombination. In Arabidopsis thaliana (Mouse-ear cress), this protein is DNA mismatch repair protein PMS1 (PMS1).